Reading from the N-terminus, the 267-residue chain is Dynein axonemal assembly factor 19 homolog (267 aa).

Disordered regions lie at residues 86 to 111 (ISQS…RDWR) and 226 to 250 (HQGK…VDPC).

Belongs to the DNAAF19/PR46b family. As to quaternary structure, homodimer.

The protein localises to the cytoplasm. It is found in the cell projection. It localises to the cilium. Its subcellular location is the flagellum. In terms of biological role, dynein-attachment factor required for cilia motility. In Chlamydomonas reinhardtii (Chlamydomonas smithii), this protein is Dynein axonemal assembly factor 19 homolog (PR46b).